We begin with the raw amino-acid sequence, 75 residues long: MALAIGLCLGLGIPISLIIGAVIGYYFAGKYFKKQLKENPPITESQIRAMYQQMGRKPTEKQIKQIMATFKKNNK.

A helical transmembrane segment spans residues 5–27; sequence IGLCLGLGIPISLIIGAVIGYYF.

Belongs to the UPF0154 family.

The protein resides in the membrane. This Malacoplasma penetrans (strain HF-2) (Mycoplasma penetrans) protein is UPF0154 protein MYPE400.